A 381-amino-acid chain; its full sequence is L-lactate dehydrogenase (381 aa).

Residues 1-380 (MIISSASDYR…KPEALVDLSK (380 aa)) enclose the FMN hydroxy acid dehydrogenase domain. Tyrosine 24 contacts substrate. Serine 106 and glutamine 127 together coordinate FMN. Tyrosine 129 provides a ligand contact to substrate. Threonine 155 lines the FMN pocket. Arginine 164 lines the substrate pocket. Lysine 251 serves as a coordination point for FMN. Catalysis depends on histidine 275, which acts as the Proton acceptor. Position 278 (arginine 278) interacts with substrate. 306–330 (DSGIRNGLDIVRMLALGADATMLGR) lines the FMN pocket.

It belongs to the FMN-dependent alpha-hydroxy acid dehydrogenase family. Requires FMN as cofactor.

Its subcellular location is the cell inner membrane. The enzyme catalyses (S)-lactate + A = pyruvate + AH2. In terms of biological role, catalyzes the conversion of L-lactate to pyruvate. Is coupled to the respiratory chain. The chain is L-lactate dehydrogenase from Haemophilus influenzae (strain ATCC 51907 / DSM 11121 / KW20 / Rd).